The chain runs to 546 residues: Probable protein kinase UbiB (546 aa).

Residues 124–502 (DFDIQPLASA…HVRQSQSRYL (379 aa)) form the Protein kinase domain. ATP contacts are provided by residues 130-138 (LASASIAQV) and Lys-153. Asp-288 (proton acceptor) is an active-site residue. The next 2 helical transmembrane spans lie at 501 to 521 (YLLGIGATLLLSGSFLLVNRP) and 522 to 542 (EWGLMPGWLMVGGVVVWLVGW).

Belongs to the ABC1 family. UbiB subfamily.

It localises to the cell inner membrane. Its pathway is cofactor biosynthesis; ubiquinone biosynthesis [regulation]. In terms of biological role, is probably a protein kinase regulator of UbiI activity which is involved in aerobic coenzyme Q (ubiquinone) biosynthesis. The sequence is that of Probable protein kinase UbiB from Salmonella agona (strain SL483).